Reading from the N-terminus, the 1575-residue chain is Lysophospholipase NTE1 (1575 aa).

The segment at 1–56 is disordered; sequence MNLTTTMPAAVAPDPPAQLAVSSRSLSDSSDAAGASRTSSSCRASSPSHCPTHAWN. Residues 1-99 lie on the Cytoplasmic side of the membrane; it reads MNLTTTMPAA…TLSPPNLLQG (99 aa). A compositionally biased stretch (low complexity) spans 19 to 48; the sequence is LAVSSRSLSDSSDAAGASRTSSSCRASSPS. The chain crosses the membrane as a helical span at residues 100–120; the sequence is IVSQLAMASYIGRLLLYLFQV. At 121–151 the chain is on the lumenal side; that stretch reads VPSLLYWAITFTTITVPTALFTLFSMSLTFT. Residues 152–172 traverse the membrane as a helical segment; the sequence is MNFTTLLIIVLLLVSTVSWFI. The Cytoplasmic segment spans residues 173–1575; it reads RYRFLNIYSR…RTMAPRRASI (1403 aa). 2 disordered regions span residues 339-425 and 568-587; these read DMES…AKSV and GSASNPIRYGDHESTGVSPG. Residues 409-424 show a composition bias toward basic residues; it reads RGHRRKRPSRPKRAKS. Residues 737–856 and 894–1014 contribute to the a nucleoside 3',5'-cyclic phosphate site; these read GGTS…TSYR and RLTT…IAQR. Residues 1272 to 1436 enclose the PNPLA domain; it reads LVLGGGGARG…VDNLTVARMK (165 aa). The GXGXXG motif lies at 1276-1281; the sequence is GGGARG. The GXSXG signature appears at 1303–1307; it reads GTSIG. Residue Ser-1305 is the Nucleophile of the active site. The Proton acceptor role is filled by Asp-1423. A DGA/G motif is present at residues 1423–1425; sequence DGG.

The protein belongs to the NTE family.

The protein localises to the endoplasmic reticulum membrane. It catalyses the reaction a 1-acyl-sn-glycero-3-phosphocholine + H2O = sn-glycerol 3-phosphocholine + a fatty acid + H(+). With respect to regulation, inhibited by organophosphorus esters. Functionally, intracellular phospholipase B that catalyzes the double deacylation of phosphatidylcholine (PC) to glycerophosphocholine (GroPCho). Plays an important role in membrane lipid homeostasis. Responsible for the rapid PC turnover in response to inositol, elevated temperatures, or when choline is present in the growth medium. The protein is Lysophospholipase NTE1 (NTE1) of Coccidioides immitis (strain RS) (Valley fever fungus).